Here is a 39-residue protein sequence, read N- to C-terminus: Large ribosomal subunit protein bL36 (39 aa).

Belongs to the bacterial ribosomal protein bL36 family.

This Oenococcus oeni (strain ATCC BAA-331 / PSU-1) protein is Large ribosomal subunit protein bL36.